Consider the following 211-residue polypeptide: tRNA (guanine-N(7)-)-methyltransferase (211 aa).

4 residues coordinate S-adenosyl-L-methionine: glutamate 44, aspartate 69, aspartate 96, and aspartate 118. Aspartate 118 is a catalytic residue. Lysine 122 provides a ligand contact to substrate. The interval 124–129 (RHEKRR) is interaction with RNA. Residues aspartate 154 and 191–194 (TEYE) each bind substrate.

Belongs to the class I-like SAM-binding methyltransferase superfamily. TrmB family.

The catalysed reaction is guanosine(46) in tRNA + S-adenosyl-L-methionine = N(7)-methylguanosine(46) in tRNA + S-adenosyl-L-homocysteine. The protein operates within tRNA modification; N(7)-methylguanine-tRNA biosynthesis. In terms of biological role, catalyzes the formation of N(7)-methylguanine at position 46 (m7G46) in tRNA. This is tRNA (guanine-N(7)-)-methyltransferase from Streptococcus equi subsp. equi (strain 4047).